The sequence spans 397 residues: Acetate kinase 1 (397 aa).

Asn8 contributes to the Mg(2+) binding site. An ATP-binding site is contributed by Lys15. A substrate-binding site is contributed by Arg89. Asp146 (proton donor/acceptor) is an active-site residue. ATP-binding positions include His206–Gly210, Asp281–Arg283, and Gly329–Asn333. Residue Glu382 participates in Mg(2+) binding.

This sequence belongs to the acetokinase family. In terms of assembly, homodimer. Mg(2+) is required as a cofactor. It depends on Mn(2+) as a cofactor.

The protein resides in the cytoplasm. The catalysed reaction is acetate + ATP = acetyl phosphate + ADP. It participates in metabolic intermediate biosynthesis; acetyl-CoA biosynthesis; acetyl-CoA from acetate: step 1/2. In terms of biological role, catalyzes the formation of acetyl phosphate from acetate and ATP. Can also catalyze the reverse reaction. The sequence is that of Acetate kinase 1 from Listeria innocua serovar 6a (strain ATCC BAA-680 / CLIP 11262).